Reading from the N-terminus, the 221-residue chain is MMLVPLITVTVVAGTILVCYILYICRKKIRTVYNDNKIIMTKLKKIKSSNSSKSSKSTDSESDWEDHCSAMEQNNDVDNISRNEILDDDSFAGSLIWDNESNVMAPSTEHIYDSVAGSTLLINNDRNEQTIYQNTTVVINETETVEVLNEDTKQNPNYSSNPFVNYNKTSICSKSNPFITELNNKFSENNPFRRAHSDDYLNKQEQDHEHDDIESSVVSLV.

Residue Met1 is a topological domain, extracellular. The chain crosses the membrane as a helical span at residues Met2–Leu22. Topologically, residues Tyr23–Val221 are cytoplasmic. Residues Tyr112 and Tyr132 each carry the phosphotyrosine; by host modification. 3 consecutive short sequence motifs (NPF-motif) follow at residues Asn161–Phe163, Asn176–Phe178, and Asn190–Phe192.

It belongs to the orthopoxvirus OPG164 protein family. In terms of assembly, interacts with host NCK. Interacts with protein OPG161 (via C-terminus). Interacts with protein OPG056. Interacts (via C-terminus) with host kinesin light chain/KLC1. Interacts with host intersectin-1/ITSN1 and EPS15. Post-translationally, phosphorylated on Tyr-112 and Tyr-132. Phosphorylations activate the host ARP2-ARP3 complex and lead to actin nucleation.

The protein resides in the host cell membrane. Functionally, involved in the intracellular transport and egress of virions to the host cell surface with help of protein OPG056. Also participates in the formation of actin tails at the plasma membrane to allow efficient actin-based motility and thus cell to cell transmission of viral particles. Recruits host intersectin-1/ITSN1 and activates host CDC42 to drive ARP2/3-mediated actin polymerization. The protein is Protein OPG164 (OPG164) of Homo sapiens (Human).